The chain runs to 308 residues: Probable very-long-chain enoyl-CoA reductase art-1 (308 aa).

Residues 7-85 (VYDAKRTDNL…VLYVRDLGPQ (79 aa)) form the Ubiquitin-like domain. 4 consecutive transmembrane segments (helical) span residues 112 to 132 (FIYGQAAVNATMHPAVQIAFF), 169 to 189 (WGFAAFVAYFVNHPLFTPPAF), 194 to 214 (VYFGLAGFVISEFGNLSIHIL), and 255 to 275 (WIFFSIMVQSLPAIIFTTAGF).

Belongs to the steroid 5-alpha reductase family.

It localises to the endoplasmic reticulum membrane. It carries out the reaction a very-long-chain 2,3-saturated fatty acyl-CoA + NADP(+) = a very-long-chain (2E)-enoyl-CoA + NADPH + H(+). It functions in the pathway lipid metabolism; fatty acid biosynthesis. Functionally, catalyzes the last of the four reactions of the long-chain fatty acids elongation cycle. This endoplasmic reticulum-bound enzymatic process, allows the addition of 2 carbons to the chain of long- and very long-chain fatty acids/VLCFAs per cycle. This enzyme reduces the trans-2,3-enoyl-CoA fatty acid intermediate to an acyl-CoA that can be further elongated by entering a new cycle of elongation. Thereby, it participates in the production of VLCFAs of different chain lengths that are involved in multiple biological processes as precursors of membrane lipids and lipid mediators. The chain is Probable very-long-chain enoyl-CoA reductase art-1 (art-1) from Caenorhabditis elegans.